The primary structure comprises 368 residues: Probable magnesium transporter (368 aa).

At 1–4 the chain is on the extracellular side; the sequence is MEDK. The helical transmembrane segment at 5–25 threads the bilayer; it reads YIGLALAMSSSLAIGTSFIIT. Topologically, residues 26–50 are cytoplasmic; it reads KKGLMDASARTGGTDGVQASDYLQN. The chain crosses the membrane as a helical span at residues 51–71; sequence PIWWGGMITMAIGEIANFAAY. Topologically, residues 72–76 are extracellular; it reads TFAPA. The helical transmembrane segment at 77-97 threads the bilayer; that stretch reads ILVTPLGALSVIIGAVLAAIF. Residues 98-101 lie on the Cytoplasmic side of the membrane; that stretch reads LKER. Residues 102–122 form a helical membrane-spanning segment; sequence LGTLGKMGCAICLMGSVIIIL. The Extracellular portion of the chain corresponds to 123 to 143; sequence HAPPDKEVQTVDEILGYATQP. Residues 144–164 form a helical membrane-spanning segment; the sequence is GFMFYCTVVTLYSLFMIYKIV. The Cytoplasmic segment spans residues 165–175; that stretch reads PKYGNTNPMIY. A helical transmembrane segment spans residues 176–196; sequence LSICSSVGSISVMSIKAFGIA. Topologically, residues 197-206 are extracellular; that stretch reads LKLTLGGNNQ. The helical transmembrane segment at 207–227 threads the bilayer; that stretch reads FTHVSTYLFLIVVALCIVTQM. Residues 228–240 are Cytoplasmic-facing; that stretch reads NYFNKALDQFDTS. A helical transmembrane segment spans residues 241-261; that stretch reads IVNPLYYVTFTTFTLAASFIL. The Extracellular portion of the chain corresponds to 262-269; it reads FKGFNTSS. Residue Asn-266 is glycosylated (N-linked (GlcNAc...) asparagine). The chain crosses the membrane as a helical span at residues 270–290; it reads AVDIISLLIGFLIIFSGVYLL. Topologically, residues 291–368 are cytoplasmic; sequence NISRSESPMV…GDEDTRNYRH (78 aa).

The protein belongs to the NIPA family.

It is found in the cell membrane. The protein localises to the early endosome. It catalyses the reaction Mg(2+)(in) = Mg(2+)(out). Probably acts as a selective Mg(2+) transporter. Plays a role in cell wall integrity and in engulfment by host macrophages. The sequence is that of Probable magnesium transporter from Candida albicans (strain SC5314 / ATCC MYA-2876) (Yeast).